The chain runs to 251 residues: Metallo-beta-lactamase domain-containing protein 1 (251 aa).

The Zn(2+) site is built by His-118, His-120, Asp-122, His-123, His-173, Asp-196, and His-235.

Belongs to the metallo-beta-lactamase superfamily. Glyoxalase II family. As to quaternary structure, homodimer. Zn(2+) serves as cofactor.

It localises to the cytoplasm. The protein resides in the cytosol. It is found in the nucleus. It carries out the reaction a ribonucleotidyl-ribonucleotide-RNA + H2O = a 3'-end ribonucleotide-RNA + a 5'-end 5'-phospho-ribonucleoside-RNA + H(+). Functionally, endoribonuclease that catalyzes the hydrolysis of histone-coding pre-mRNA 3'-end. Involved in histone pre-mRNA processing during the S-phase of the cell cycle, which is required for entering/progressing through S-phase. Cleaves histone pre-mRNA at a major and a minor cleavage site after the 5'-ACCCA-3' and the 5'-ACCCACA-3' sequence, respectively, and located downstream of the stem-loop. May require the presence of the HDE element located at the histone pre-RNA 3'-end to avoid non-specific cleavage. In Rattus norvegicus (Rat), this protein is Metallo-beta-lactamase domain-containing protein 1 (Mblac1).